Consider the following 516-residue polypeptide: GMP synthase [glutamine-hydrolyzing] (516 aa).

A Glutamine amidotransferase type-1 domain is found at 7 to 203 (SVIVLDFGSQ…LIDIAGITPD (197 aa)). The Nucleophile role is filled by C84. Residues H177 and E179 contribute to the active site. A GMPS ATP-PPase domain is found at 204–391 (WSPKSFIQHQ…LGIAEDILMR (188 aa)). 231-237 (SGGVDST) contributes to the ATP binding site.

As to quaternary structure, homodimer.

The enzyme catalyses XMP + L-glutamine + ATP + H2O = GMP + L-glutamate + AMP + diphosphate + 2 H(+). The protein operates within purine metabolism; GMP biosynthesis; GMP from XMP (L-Gln route): step 1/1. Its function is as follows. Catalyzes the synthesis of GMP from XMP. The chain is GMP synthase [glutamine-hydrolyzing] from Chlorobaculum tepidum (strain ATCC 49652 / DSM 12025 / NBRC 103806 / TLS) (Chlorobium tepidum).